Consider the following 439-residue polypeptide: Adenylosuccinate synthetase (439 aa).

GTP contacts are provided by residues 14–20 (GDEGKGK) and 42–44 (GHT). The active-site Proton acceptor is the Asp15. Asp15 and Gly42 together coordinate Mg(2+). IMP contacts are provided by residues 15-18 (DEGK), 40-43 (NAGH), Thr130, Arg144, Gln225, Thr240, and Arg304. His43 functions as the Proton donor in the catalytic mechanism. 300–306 (TTTGRRR) is a substrate binding site. GTP contacts are provided by residues Arg306, 332–334 (KLD), and 414–416 (SLG).

This sequence belongs to the adenylosuccinate synthetase family. In terms of assembly, homodimer. Mg(2+) serves as cofactor.

It is found in the cytoplasm. It catalyses the reaction IMP + L-aspartate + GTP = N(6)-(1,2-dicarboxyethyl)-AMP + GDP + phosphate + 2 H(+). The protein operates within purine metabolism; AMP biosynthesis via de novo pathway; AMP from IMP: step 1/2. Plays an important role in the de novo pathway of purine nucleotide biosynthesis. Catalyzes the first committed step in the biosynthesis of AMP from IMP. This Prochlorococcus marinus (strain MIT 9303) protein is Adenylosuccinate synthetase.